The chain runs to 606 residues: Putative amino acid transporter AAT1 (606 aa).

The disordered stretch occupies residues 1–156; sequence MNKKYGTSSN…DEEGTNKPKR (156 aa). 2 stretches are compositionally biased toward basic and acidic residues: residues 12-25 and 72-89; these read HDNK…ADKN and SDKK…ESSK. Positions 140–149 are enriched in acidic residues; sequence SDGDYTNDEE. The next 11 helical transmembrane spans lie at 175-194, 200-225, 246-271, 283-301, 313-332, 352-372, 393-412, 428-449, 522-539, 545-567, and 579-605; these read TVLF…PYVF, ILSI…TSSL, TIID…SNFL, LFTN…ILPI, FLIF…GLQT, HFFK…NACF, VILQ…FSFL, VSIL…PLNF, MWIS…ACKV, VIGI…LIYY, and RYST…LNLI.

It belongs to the amino acid/polyamine transporter 2 family.

It localises to the vacuole membrane. Its function is as follows. Putative amino acid transporter. Probably transports tryptophan. Involved in maintaining the osmotic homeostasis of the digestive vacuole. Important for the timely development and growth of the asexual-stage parasites and male gametocyte maturation. This Plasmodium falciparum (isolate 3D7) protein is Putative amino acid transporter AAT1.